Here is a 931-residue protein sequence, read N- to C-terminus: Neuropilin-2 (931 aa).

An N-terminal signal peptide occupies residues 1–20 (MDMFPLTWVFLALYFSGHEV). The Extracellular segment spans residues 21 to 864 (RSQQDPPCGG…EKSWLYTLDP (844 aa)). 3 disulfides stabilise this stretch: cysteine 28–cysteine 55, cysteine 83–cysteine 105, and cysteine 149–cysteine 175. 2 CUB domains span residues 28–142 (CGGR…YEIF) and 149–267 (CSKN…YYLI). 2 N-linked (GlcNAc...) asparagine glycosylation sites follow: asparagine 152 and asparagine 157. 3 residues coordinate Ca(2+): glutamate 197, aspartate 211, and aspartate 252. Cysteine 208 and cysteine 230 form a disulfide bridge. 2 cysteine pairs are disulfide-bonded: cysteine 277/cysteine 427 and cysteine 434/cysteine 592. 2 consecutive F5/8 type C domains span residues 277–427 (CNVP…LFGC) and 434–592 (CSNM…VLGC). Over residues 298-310 (TFSDGRWTPQQSR) the composition is skewed to polar residues. Positions 298-317 (TFSDGRWTPQQSRLHGDDNG) are disordered. A disordered region spans residues 601-621 (VETLGPTVKSEETTTPYPMDE). Residue asparagine 629 is glycosylated (N-linked (GlcNAc...) asparagine). The MAM domain occupies 642-802 (SGFNCNFDFP…TDVPLENCME (161 aa)). The segment at 819–854 (THGGEGYEDEIDDEYEGDWSNSSSSTSGAGDPSSGK) is disordered. The segment covering 824–835 (GYEDEIDDEYEG) has biased composition (acidic residues). Residues 836 to 851 (DWSNSSSSTSGAGDPS) are compositionally biased toward low complexity. N-linked (GlcNAc...) asparagine glycosylation is present at asparagine 839. A helical transmembrane segment spans residues 865-889 (ILITIIAMSSLGVLLGATCAGLLLY). Residues 890 to 931 (CTCSYSGLSSRSCTTLENYNFELYDGLKHKVKINHQKCCSEA) are Cytoplasmic-facing.

It belongs to the neuropilin family. As to quaternary structure, heterodimer with NRP1. Binds PLXNB1. As to expression, expressed in developing CNS, PNS and in some nonneural tissues including limb buds, developing bones, muscles, intestinal epithelium, kidney, lung and submandibular gland.

It is found in the membrane. High affinity receptor for semaphorins 3C, 3F, VEGF-165 and VEGF-145 isoforms of VEGF, and the PLGF-2 isoform of PGF. The chain is Neuropilin-2 (Nrp2) from Mus musculus (Mouse).